The chain runs to 321 residues: Phospho-N-acetylmuramoyl-pentapeptide-transferase (321 aa).

10 helical membrane passes run 6–26 (IFIPIVVSFAITVSVMPLFIG), 54–74 (MGGVVFLVASLITSLAMGLFF), 77–97 (FTPSLLIILFILVLYGLLGYL), 117–137 (LIGQIFGGLVFYFVYRSEGFS), 143–163 (FGVAEVPLGIFYGVFIIFWLV), 175–195 (IDGLVAGLGTISFGTYAIIAW), 200–220 (FDVVIICLSVIGGLIGFFPYN), 226–246 (IFMGDVGSLALGGLLAAISII), 251–271 (WTLLLIGLVYVCETASVILQV), and 301–321 (IDFVFWSVGLICSGITLWILF).

It belongs to the glycosyltransferase 4 family. MraY subfamily. The cofactor is Mg(2+).

The protein resides in the cell membrane. The enzyme catalyses UDP-N-acetyl-alpha-D-muramoyl-L-alanyl-gamma-D-glutamyl-L-lysyl-D-alanyl-D-alanine + di-trans,octa-cis-undecaprenyl phosphate = Mur2Ac(oyl-L-Ala-gamma-D-Glu-L-Lys-D-Ala-D-Ala)-di-trans,octa-cis-undecaprenyl diphosphate + UMP. It participates in cell wall biogenesis; peptidoglycan biosynthesis. In terms of biological role, catalyzes the initial step of the lipid cycle reactions in the biosynthesis of the cell wall peptidoglycan: transfers peptidoglycan precursor phospho-MurNAc-pentapeptide from UDP-MurNAc-pentapeptide onto the lipid carrier undecaprenyl phosphate, yielding undecaprenyl-pyrophosphoryl-MurNAc-pentapeptide, known as lipid I. The chain is Phospho-N-acetylmuramoyl-pentapeptide-transferase from Enterococcus faecalis (strain ATCC 700802 / V583).